Reading from the N-terminus, the 511-residue chain is Lysine--tRNA ligase (511 aa).

2 residues coordinate Mg(2+): Glu421 and Glu428.

This sequence belongs to the class-II aminoacyl-tRNA synthetase family. As to quaternary structure, homodimer. Mg(2+) is required as a cofactor.

The protein resides in the cytoplasm. It carries out the reaction tRNA(Lys) + L-lysine + ATP = L-lysyl-tRNA(Lys) + AMP + diphosphate. This Janthinobacterium sp. (strain Marseille) (Minibacterium massiliensis) protein is Lysine--tRNA ligase.